The primary structure comprises 320 residues: Probable carboxylesterase M8 (320 aa).

An Involved in the stabilization of the negatively charged intermediate by the formation of the oxyanion hole motif is present at residues 52–54 (HGG). Residues Ser-137 and His-296 contribute to the active site.

It belongs to the 'GDXG' lipolytic enzyme family.

The enzyme catalyses a carboxylic ester + H2O = an alcohol + a carboxylate + H(+). The protein operates within secondary metabolite biosynthesis. In terms of biological role, probable carboxylesterase; part of the gene cluster that mediates the biosynthesis of squalestatin S1 (SQS1, also known as zaragozic acid A), a heavily oxidized fungal polyketide that offers potent cholesterol lowering activity by targeting squalene synthase (SS). SQS1 is composed of a 2,8-dioxobicyclic[3.2.1]octane-3,4,5-tricarboxyclic acid core that is connected to two lipophilic polyketide arms. These initial steps feature the priming of an unusual benzoic acid starter unit onto the highly reducing polyketide synthase pks2, followed by oxaloacetate extension and product release to generate a tricarboxylic acid containing product. The phenylalanine ammonia lyase (PAL) M7 and the acyl-CoA ligase M9 are involved in transforming phenylalanine into benzoyl-CoA. The citrate synthase-like protein R3 is involved in connecting the C-alpha-carbons of the hexaketide chain and oxaloacetate to afford the tricarboxylic acid unit. The potential hydrolytic enzymes, M8 and M10, are in close proximity to pks2 and may participate in product release. On the other side, the tetraketide arm is synthesized by a the squalestatin tetraketide synthase pks1 and enzymatically esterified to the core in the last biosynthetic step, by the acetyltransferase M4. The biosynthesis of the tetraketide must involve 3 rounds of chain extension. After the first and second rounds methyl-transfer occurs, and in all rounds of extension the ketoreductase and dehydratase are active. The enoyl reductase and C-MeT of pks1 are not active in the final round of extension. The acetyltransferase M4 appears to have a broad substrate selectivity for its acyl CoA substrate, allowing the in vitro synthesis of novel squalestatins. The biosynthesis of SQS1 requires several oxidative steps likely performed by oxidoreductases M1, R1 and R2. Finally, in support of the identification of the cluster as being responsible for SQS1 production, the cluster contains a gene encoding a putative squalene synthase (SS) R6, suggesting a likely mechanism for self-resistance. In Phoma sp. (strain ATCC 20986 / MF5453), this protein is Probable carboxylesterase M8.